A 1039-amino-acid chain; its full sequence is MVMVDALNLGRRLRVRSTAYVAGEPVPFSWPMRTFISRNPLYGLEHMPFEQAVRRGAELFHARMFLPRSDYQRWQREGKVRQDTLAEEIARRAQALPAVPGIDWPRWLQALMQSAHDRDVVVPGVRAPDVHAALHGQPPSAQAVDVAVLLPALEQRLHGLTLPEAVDALWGTRLADELDELVIKSYLDFFDEDQSSWRMPGRERGLFAAWSEIAQRNARMFLRRLHVRRTLGRVQDPESAVVHVMEEMGIDPDAWSAYFTRELTRLYGWTGFVRWRSSAKHYYWAQRYPAEVVDLLAVRLVVGLALLQESARHRRTPVRREQLDALLHERGAECLLRNALHSGEVLPDWAQRIDDTLSRGGSKRCEALLQRYWPLWQARQGQDQAAALRELAAAADATAALEVLSPEDIAGLIQGLQEFARQEGMVWTLAMEAQAIDQLLAQVQVPQDLAAGKRPFAQAWFCIDVRAEPIRRHLERVGDYQTFGIAGFFGVPVGFLGYGKGSESHFCPAVVTPKNLVLELPAELDPEEDDLLSTLGHVLHDLKSSVLSPYVTVEAVGMLFGLDLFGKTLAPLGYSRWRNRIDADKPVTRLLVDKLTREQADSIIRTLQRAMIVKALHAELHIERERVDDDMIRELRETALRHREGPTRLQRTFGVSDKQEAEFIDKLREVYRVDADYASYQLVRLGRIGYSLDEQVNYVHTALTMIGLTKTFSRFVLIVGHSGQTENNPYESALDCGACGGASGLVNARVLAQMANKTAVRERLRGMGIDIPDDTWFLPALHNTTTDAIELSDLVLLPPRHLVYLDRLRNGLRAASRLAAAERMPKLLPQARAIEPAQAWRLAHRLAVDWAQVRPEWGLSKNVYGIIGRRSLSERADLQGRPFLMSYDWRCDPKGRLLENLLAAPVVVGQWINLEYFFSTVDNARLGSGSKAYHNVAGRFGVMTGSLSDLRTGLPAQTVMREGQPYHEPMRMIALIEAPLDFAGRALQSVVKVKSLVLGGWIRAIVIDPTQGYKPFVFNNGQWEERPPLVAPAEEEHAA.

Residues cysteine 462, aspartate 464, histidine 721, and cysteine 736 each contribute to the Zn(2+) site.

It belongs to the inorganic carbon transporter (TC 9.A.2) DabA family. As to quaternary structure, forms a complex with DabB. It depends on Zn(2+) as a cofactor.

The protein resides in the cell inner membrane. Its function is as follows. Part of an energy-coupled inorganic carbon pump. In Nitrobacter hamburgensis (strain DSM 10229 / NCIMB 13809 / X14), this protein is Probable inorganic carbon transporter subunit DabA 2.